We begin with the raw amino-acid sequence, 551 residues long: Protein GZF3 (551 aa).

Positions 17–43 are disordered; that stretch reads DNVFEPKSSENLNSLNQSEEEGHIGRW. Residues 131–155 form a GATA-type zinc finger; the sequence is CKNCLTSTTPLWRRDEHGAMLCNAC. Disordered stretches follow at residues 212–260, 379–400, and 467–490; these read GRKA…SATK, LAPTSSRTTDSNPSEVPNQIRS, and SISNSVSSSDVSGRKFENHPAKDL. A compositionally biased stretch (polar residues) spans 228–239; the sequence is SQLLMGTSSTAK. A compositionally biased stretch (basic and acidic residues) spans 244–254; it reads PKTESKERSDS. A compositionally biased stretch (polar residues) spans 388 to 400; it reads DSNPSEVPNQIRS. Residues 467 to 477 show a composition bias toward low complexity; the sequence is SISNSVSSSDV. Positions 478–490 are enriched in basic and acidic residues; the sequence is SGRKFENHPAKDL.

Its subcellular location is the nucleus. This is Protein GZF3 (GZF3) from Saccharomyces cerevisiae (strain ATCC 204508 / S288c) (Baker's yeast).